The sequence spans 130 residues: MRMRFVVMVILLPALMMSGSECRSSCRLTNISITVESEECGSCITIDTTACAGLCKTQESVYRSPLMLSYQNTCNFREWTYETYEFKGCPARADSIFTYPVALSCECSKCNSDITDCGVLSQQTLGCNAH.

The first 18 residues, 1–18, serve as a signal peptide directing secretion; sequence MRMRFVVMVILLPALMMS. Intrachain disulfides connect C26–C74, C40–C89, C51–C105, C55–C107, and C110–C117. Residue N30 is glycosylated (N-linked (GlcNAc...) asparagine).

This sequence belongs to the glycoprotein hormones subunit beta family. In terms of assembly, heterodimer of an alpha and a beta chain.

The protein resides in the secreted. Its function is as follows. Involved in gametogenesis and steroidogenesis. This Carassius auratus (Goldfish) protein is Gonadotropin subunit beta-1 (cgba).